The chain runs to 344 residues: Uroporphyrinogen decarboxylase (344 aa).

Substrate-binding positions include 24–28 (RQAGR), Phe-43, Asp-74, Tyr-151, Ser-206, and His-323.

It belongs to the uroporphyrinogen decarboxylase family. Homodimer.

The protein resides in the cytoplasm. It carries out the reaction uroporphyrinogen III + 4 H(+) = coproporphyrinogen III + 4 CO2. It functions in the pathway porphyrin-containing compound metabolism; protoporphyrin-IX biosynthesis; coproporphyrinogen-III from 5-aminolevulinate: step 4/4. Functionally, catalyzes the decarboxylation of four acetate groups of uroporphyrinogen-III to yield coproporphyrinogen-III. The polypeptide is Uroporphyrinogen decarboxylase (Rhodobacter capsulatus (Rhodopseudomonas capsulata)).